Consider the following 127-residue polypeptide: Large ribosomal subunit protein bL12 (127 aa).

Positions 93–127 (LVDEAPNPVSEGVSREEADDLKAQIEDAGGEVELQ) are disordered. Residues 105–117 (VSREEADDLKAQI) are compositionally biased toward basic and acidic residues.

The protein belongs to the bacterial ribosomal protein bL12 family. Homodimer. Part of the ribosomal stalk of the 50S ribosomal subunit. Forms a multimeric L10(L12)X complex, where L10 forms an elongated spine to which 2 to 4 L12 dimers bind in a sequential fashion. Binds GTP-bound translation factors.

Its function is as follows. Forms part of the ribosomal stalk which helps the ribosome interact with GTP-bound translation factors. Is thus essential for accurate translation. This is Large ribosomal subunit protein bL12 from Salinibacter ruber (strain DSM 13855 / M31).